The chain runs to 251 residues: Octanoyltransferase (251 aa).

The 223-residue stretch at A29 to P251 folds into the BPL/LPL catalytic domain. Residue R68–H75 participates in substrate binding. Residues A137–D174 form a disordered region. Substrate is bound by residues A184–G186 and G197–A199. C215 functions as the Acyl-thioester intermediate in the catalytic mechanism.

This sequence belongs to the LipB family.

It is found in the cytoplasm. The enzyme catalyses octanoyl-[ACP] + L-lysyl-[protein] = N(6)-octanoyl-L-lysyl-[protein] + holo-[ACP] + H(+). It participates in protein modification; protein lipoylation via endogenous pathway; protein N(6)-(lipoyl)lysine from octanoyl-[acyl-carrier-protein]: step 1/2. Functionally, catalyzes the transfer of endogenously produced octanoic acid from octanoyl-acyl-carrier-protein onto the lipoyl domains of lipoate-dependent enzymes. Lipoyl-ACP can also act as a substrate although octanoyl-ACP is likely to be the physiological substrate. The protein is Octanoyltransferase of Polaromonas sp. (strain JS666 / ATCC BAA-500).